A 292-amino-acid polypeptide reads, in one-letter code: MASISAKLVKELRDKIGVGMMDAKKALVATEGDMDKAVDFLREKGIAKAAKKSDRVAAEGLADVEMHDNTAAIVEVNSETDFVASNDRFIDLVKEIASQVALEKPADVDAALKLKSPKGTLNDDIIEATQVIGEKISLRRFATLEKGENEHFGSYLHMGGKIAALVLLEGADEETAKDVAMHVAAINPKYVNRDQVPAEVLDHEREVLSKEAEGEGKPANIIEKMVTGRLNKFLAEISLDDQEYVKDPDQTVAKYVASKGGKVKSFIRFEVGEGIEKQTVDFAEEVRKEMGQ.

Residues 80-83 are involved in Mg(2+) ion dislocation from EF-Tu; that stretch reads TDFV.

Belongs to the EF-Ts family.

The protein localises to the cytoplasm. Associates with the EF-Tu.GDP complex and induces the exchange of GDP to GTP. It remains bound to the aminoacyl-tRNA.EF-Tu.GTP complex up to the GTP hydrolysis stage on the ribosome. The polypeptide is Elongation factor Ts (Pediococcus pentosaceus (strain ATCC 25745 / CCUG 21536 / LMG 10740 / 183-1w)).